Reading from the N-terminus, the 275-residue chain is Protein CIMAP1C (275 aa).

STPGR repeat units follow at residues 200 to 225 (PGPA…MAKR) and 236 to 261 (PGPG…MGIK).

The protein belongs to the CIMAP family.

The chain is Protein CIMAP1C (CIMAP1C) from Mus musculus (Mouse).